The following is a 245-amino-acid chain: MRVDGREKTELRHIHIHTNYLKHPEGSVLIEVGDTKVICSATIEERVPPFMRGEGKGWVTAEYAMIPRATEQRTIRESSKGKVTGRTMEIQRLIGRALRAVVDLEALGERTVWIDCDVIQADGGTRTASITGAYVAMVLAFEKLLQAEKVSKIPVKDYLAATSVGIVEEQGVVLDLNYAEDSKADVDMNVIMTGKGQFVEVQGTGEEATFSRAQLNELLDAAEQGIFQLIDIQKEALGDIVSHIE.

Residues Arg-86 and 124–126 (GTR) contribute to the phosphate site.

It belongs to the RNase PH family. As to quaternary structure, homohexameric ring arranged as a trimer of dimers.

The enzyme catalyses tRNA(n+1) + phosphate = tRNA(n) + a ribonucleoside 5'-diphosphate. Its function is as follows. Phosphorolytic 3'-5' exoribonuclease that plays an important role in tRNA 3'-end maturation. Removes nucleotide residues following the 3'-CCA terminus of tRNAs; can also add nucleotides to the ends of RNA molecules by using nucleoside diphosphates as substrates, but this may not be physiologically important. Probably plays a role in initiation of 16S rRNA degradation (leading to ribosome degradation) during starvation. This Bacillus anthracis (strain A0248) protein is Ribonuclease PH.